The sequence spans 434 residues: Enolase (434 aa).

Gln163 contributes to the (2R)-2-phosphoglycerate binding site. The active-site Proton donor is the Glu205. Mg(2+) contacts are provided by Asp242, Glu291, and Asp318. (2R)-2-phosphoglycerate-binding residues include Lys343, Arg372, Ser373, and Lys394. The active-site Proton acceptor is the Lys343.

Belongs to the enolase family. The cofactor is Mg(2+).

The protein localises to the cytoplasm. Its subcellular location is the secreted. It is found in the cell surface. It catalyses the reaction (2R)-2-phosphoglycerate = phosphoenolpyruvate + H2O. Its pathway is carbohydrate degradation; glycolysis; pyruvate from D-glyceraldehyde 3-phosphate: step 4/5. Catalyzes the reversible conversion of 2-phosphoglycerate (2-PG) into phosphoenolpyruvate (PEP). It is essential for the degradation of carbohydrates via glycolysis. This chain is Enolase, found in Streptococcus sanguinis (strain SK36).